Consider the following 273-residue polypeptide: UPF0380 protein YafZ (273 aa).

This sequence belongs to the UPF0380 family.

In Escherichia coli (strain K12), this protein is UPF0380 protein YafZ (yafZ).